We begin with the raw amino-acid sequence, 574 residues long: Sulfate adenylyltransferase (574 aa).

The tract at residues methionine 1–tyrosine 169 is N-terminal. Residues aspartate 170–leucine 394 are catalytic. Sulfate is bound at residue glutamine 197. Residues glutamine 197–asparagine 200 and glycine 291–histidine 294 each bind ATP. Active-site residues include threonine 198, arginine 199, and asparagine 200. Arginine 199 provides a ligand contact to sulfate. Sulfate is bound at residue alanine 295. ATP is bound at residue valine 333. The allosteric regulation domain; adenylyl-sulfate kinase-like stretch occupies residues glutamine 395–leucine 574. Residues aspartate 434 to arginine 437, arginine 451, isoleucine 477 to alanine 478, and arginine 516 each bind 3'-phosphoadenylyl sulfate.

This sequence in the N-terminal section; belongs to the sulfate adenylyltransferase family. It in the C-terminal section; belongs to the APS kinase family. In terms of assembly, homohexamer. Dimer of trimers.

The protein resides in the cytoplasm. It carries out the reaction sulfate + ATP + H(+) = adenosine 5'-phosphosulfate + diphosphate. It functions in the pathway sulfur metabolism; hydrogen sulfide biosynthesis; sulfite from sulfate: step 1/3. With respect to regulation, allosterically inhibited by 3'-phosphoadenosine 5'-phosphosulfate (PAPS). Functionally, catalyzes the first intracellular reaction of sulfate assimilation, forming adenosine-5'-phosphosulfate (APS) from inorganic sulfate and ATP. Plays an important role in sulfate activation as a component of the biosynthesis pathway of sulfur-containing amino acids. This chain is Sulfate adenylyltransferase, found in Emericella nidulans (strain FGSC A4 / ATCC 38163 / CBS 112.46 / NRRL 194 / M139) (Aspergillus nidulans).